A 400-amino-acid polypeptide reads, in one-letter code: Peptidoglycan hydrolase FlgJ (400 aa).

Disordered stretches follow at residues 112 to 155 (KQGS…GRDD) and 204 to 229 (PAAS…QPPL). The catalytic stretch occupies residues 238 to 400 (SADEFIATML…VAAAGTPPLG (163 aa)). Catalysis depends on residues glutamate 310 and aspartate 335.

This sequence in the N-terminal section; belongs to the FlgJ family. The protein in the C-terminal section; belongs to the glycosyl hydrolase 73 family.

The protein localises to the periplasm. Flagellum-specific muramidase which hydrolyzes the peptidoglycan layer to assemble the rod structure in the periplasmic space. This is Peptidoglycan hydrolase FlgJ (flgJ) from Pseudomonas aeruginosa (strain ATCC 15692 / DSM 22644 / CIP 104116 / JCM 14847 / LMG 12228 / 1C / PRS 101 / PAO1).